Here is a 561-residue protein sequence, read N- to C-terminus: Proline--tRNA ligase (561 aa).

This sequence belongs to the class-II aminoacyl-tRNA synthetase family. ProS type 1 subfamily. In terms of assembly, homodimer.

It localises to the cytoplasm. It carries out the reaction tRNA(Pro) + L-proline + ATP = L-prolyl-tRNA(Pro) + AMP + diphosphate. Catalyzes the attachment of proline to tRNA(Pro) in a two-step reaction: proline is first activated by ATP to form Pro-AMP and then transferred to the acceptor end of tRNA(Pro). As ProRS can inadvertently accommodate and process non-cognate amino acids such as alanine and cysteine, to avoid such errors it has two additional distinct editing activities against alanine. One activity is designated as 'pretransfer' editing and involves the tRNA(Pro)-independent hydrolysis of activated Ala-AMP. The other activity is designated 'posttransfer' editing and involves deacylation of mischarged Ala-tRNA(Pro). The misacylated Cys-tRNA(Pro) is not edited by ProRS. This is Proline--tRNA ligase from Wigglesworthia glossinidia brevipalpis.